A 700-amino-acid chain; its full sequence is MISPNLTANVEIDGKQYNTFTEPPKALAGERAKVKFPIKDMTEFLHGGEENVTMIERLMTELERDPVLNVSGDYDMPKEQLRETAVARIAALSGHWKKDTEKEALLRSQLHGIVDMGTRIRLGVHTGLFMGAIRGSGTKEQYDYWVRKGAADVKGFYGCFAMTELGHGSNVAGLETTATYIQDTDEFIINTPNTGATKWWIGGAAHSATHTACFARLLVDGKDYGVKIFVVQLRDVSSHSLMPGIALGDIGKKMGRDAIDNGWIQFTNVRIPRQNMLMKYAKVSSTGKVSQPPLAQLTYGALIGGRVTMIADSFFVSQRFITIALRYACVRRQFGTTPGQPETKIIDYPYHQRRLLPLLAFTYAMKMAADQSQIQYDQTTDLLQTIDPKDKGALGKAIVDLKELFASSAGLKAFTTWTCANIIDQCRQACGGHGYSGYNGFGQAYADWVVQCTWEGDNNVLCLSMGRGLIQSCLGHRKGKPLGSSVGYLANKGLEQATLSGRDLKDPKVLIEAWEKVANGAIQRATDKFVELTKGGLSPDQAFEELSQQRFQCAKIHTRKHLVTAFYERINASAKADVKPYLINLANLFTLWSIEEDSGLFLREGFLQPKDIDQVTELVNHYCKEVRDQVAGYTDAFGLSDWFINAPIGNYDGDVYKHYFAKVNQQNPAQNPRPPYYESTLRPFLFREDEDDDICELDEE.

The protein belongs to the acyl-CoA oxidase family. As to quaternary structure, heteropentamer composed of five different subunits. Requires FAD as cofactor.

Its subcellular location is the peroxisome. The enzyme catalyses a 2,3-saturated acyl-CoA + O2 = a (2E)-enoyl-CoA + H2O2. The protein operates within lipid metabolism; peroxisomal fatty acid beta-oxidation. Its function is as follows. Oxidizes aliphatic acyl-CoA substrates of different chain lengths such as hexanoyl-CoA, decanoyl-CoA and myristoyl-CoA as well as aromatic/heterocyclic ring-substituted chromogenic substrates, such as furylpropionyl-CoA. Of the above substrates, the efficiency of the enzyme, exhibits the following order: decanoyl-CoA &gt; myristoyl-CoA &gt; hexanoyl-CoA &gt; furyl-propionyl-CoA. In Yarrowia lipolytica (strain CLIB 122 / E 150) (Yeast), this protein is Acyl-coenzyme A oxidase 3 (POX3).